The primary structure comprises 1322 residues: Phosphoribosylformylglycinamidine synthase (1322 aa).

300–311 (GASTGAGGEIRD) contributes to the ATP binding site. Polar residues predominate over residues 593–608 (QQTPQRANHTETSPTP). The disordered stretch occupies residues 593–613 (QQTPQRANHTETSPTPNTLPP). Ala-702 contributes to the ATP binding site. Residues Asp-703, Glu-742, Asn-746, and Asp-915 each contribute to the Mg(2+) site. An ATP-binding site is contributed by Ser-917. Positions 1073-1322 (VAILREQGIN…LFRNARAWVG (250 aa)) constitute a Glutamine amidotransferase type-1 domain. Residue Cys-1166 is the Nucleophile of the active site. Residues His-1287 and Glu-1289 contribute to the active site.

It in the N-terminal section; belongs to the FGAMS family. As to quaternary structure, monomer.

It localises to the cytoplasm. It catalyses the reaction N(2)-formyl-N(1)-(5-phospho-beta-D-ribosyl)glycinamide + L-glutamine + ATP + H2O = 2-formamido-N(1)-(5-O-phospho-beta-D-ribosyl)acetamidine + L-glutamate + ADP + phosphate + H(+). The protein operates within purine metabolism; IMP biosynthesis via de novo pathway; 5-amino-1-(5-phospho-D-ribosyl)imidazole from N(2)-formyl-N(1)-(5-phospho-D-ribosyl)glycinamide: step 1/2. In terms of biological role, phosphoribosylformylglycinamidine synthase involved in the purines biosynthetic pathway. Catalyzes the ATP-dependent conversion of formylglycinamide ribonucleotide (FGAR) and glutamine to yield formylglycinamidine ribonucleotide (FGAM) and glutamate. In Xylella fastidiosa (strain 9a5c), this protein is Phosphoribosylformylglycinamidine synthase.